The sequence spans 509 residues: ATP synthase subunit alpha (509 aa).

171-178 is a binding site for ATP; the sequence is GDRQTGKT.

Belongs to the ATPase alpha/beta chains family. F-type ATPases have 2 components, CF(1) - the catalytic core - and CF(0) - the membrane proton channel. CF(1) has five subunits: alpha(3), beta(3), gamma(1), delta(1), epsilon(1). CF(0) has three main subunits: a(1), b(2) and c(9-12). The alpha and beta chains form an alternating ring which encloses part of the gamma chain. CF(1) is attached to CF(0) by a central stalk formed by the gamma and epsilon chains, while a peripheral stalk is formed by the delta and b chains.

The protein resides in the cell inner membrane. The catalysed reaction is ATP + H2O + 4 H(+)(in) = ADP + phosphate + 5 H(+)(out). In terms of biological role, produces ATP from ADP in the presence of a proton gradient across the membrane. The alpha chain is a regulatory subunit. The protein is ATP synthase subunit alpha of Neorickettsia sennetsu (strain ATCC VR-367 / Miyayama) (Ehrlichia sennetsu).